The chain runs to 183 residues: Inosine triphosphate pyrophosphatase (183 aa).

An ITP-binding site is contributed by 8 to 13 (TGNKNK). Glu36 lines the Mg(2+) pocket. Residues Lys48, 64–65 (DT), Lys81, 140–143 (FGWD), Lys161, and 166–167 (HR) contribute to the ITP site.

Belongs to the HAM1 NTPase family. Homodimer. The cofactor is Mg(2+). Mn(2+) is required as a cofactor.

The protein localises to the cytoplasm. It is found in the nucleus. The enzyme catalyses ITP + H2O = IMP + diphosphate + H(+). It catalyses the reaction dITP + H2O = dIMP + diphosphate + H(+). It carries out the reaction XTP + H2O = XMP + diphosphate + H(+). Its function is as follows. Pyrophosphatase that hydrolyzes non-canonical purine nucleotides such as inosine triphosphate (ITP), deoxyinosine triphosphate (dITP) or xanthosine 5'-triphosphate (XTP) to their respective monophosphate derivatives. The enzyme does not distinguish between the deoxy- and ribose forms. Probably excludes non-canonical purines from RNA and DNA precursor pools, thus preventing their incorporation into RNA and DNA and avoiding chromosomal lesions. The chain is Inosine triphosphate pyrophosphatase from Ajellomyces capsulatus (strain G186AR / H82 / ATCC MYA-2454 / RMSCC 2432) (Darling's disease fungus).